The primary structure comprises 319 residues: Cytochrome f (319 aa).

Residues 1–35 (MQKKDVCEYITKWVSVTISTLVTIGVLVFPLSSEA) form the signal peptide. Residues tyrosine 36, cysteine 56, cysteine 59, and histidine 60 each contribute to the heme site. A helical membrane pass occupies residues 285 to 305 (IQGLLVFFASVVLAQIFLVLK).

This sequence belongs to the cytochrome f family. As to quaternary structure, the 4 large subunits of the cytochrome b6-f complex are cytochrome b6, subunit IV (17 kDa polypeptide, petD), cytochrome f and the Rieske protein, while the 4 small subunits are PetG, PetL, PetM and PetN. The complex functions as a dimer. Heme is required as a cofactor.

The protein resides in the plastid. Its subcellular location is the chloroplast thylakoid membrane. Its function is as follows. Component of the cytochrome b6-f complex, which mediates electron transfer between photosystem II (PSII) and photosystem I (PSI), cyclic electron flow around PSI, and state transitions. The chain is Cytochrome f from Zygnema circumcarinatum (Green alga).